Reading from the N-terminus, the 211-residue chain is Interleukin-6 (211 aa).

The first 29 residues, 1–29 (MNSLSTSAFSPVAFSLGLLLVMATAFPTP), serve as a signal peptide directing secretion. A disulfide bridge connects residues Cys71 and Cys77. Ser80 is modified (phosphoserine). Cys100 and Cys110 form a disulfide bridge.

This sequence belongs to the IL-6 superfamily. As to quaternary structure, component of a hexamer of two molecules each of IL6, IL6R and IL6ST; first binds to IL6R to associate with the signaling subunit IL6ST. Interacts with IL6R (via the N-terminal ectodomain); this interaction may be affected by IL6R-binding with SORL1, hence decreasing IL6 cis signaling. Interacts with SORL1 (via the N-terminal ectodomain); this interaction leads to IL6 internalization and lysosomal degradation. May form a trimeric complex with the soluble SORL1 ectodomain and soluble IL6R receptor; this interaction might stabilize circulating IL6, hence promoting IL6 trans signaling.

It localises to the secreted. Functionally, cytokine with a wide variety of biological functions in immunity, tissue regeneration, and metabolism. Binds to IL6R, then the complex associates to the signaling subunit IL6ST/gp130 to trigger the intracellular IL6-signaling pathway. The interaction with the membrane-bound IL6R and IL6ST stimulates 'classic signaling', whereas the binding of IL6 and soluble IL6R to IL6ST stimulates 'trans-signaling'. Alternatively, 'cluster signaling' occurs when membrane-bound IL6:IL6R complexes on transmitter cells activate IL6ST receptors on neighboring receiver cells. In terms of biological role, IL6 is a potent inducer of the acute phase response. Rapid production of IL6 contributes to host defense during infection and tissue injury, but excessive IL6 synthesis is involved in disease pathology. In the innate immune response, is synthesized by myeloid cells, such as macrophages and dendritic cells, upon recognition of pathogens through toll-like receptors (TLRs) at the site of infection or tissue injury. In the adaptive immune response, is required for the differentiation of B cells into immunoglobulin-secreting cells. Plays a major role in the differentiation of CD4(+) T cell subsets. Essential factor for the development of T follicular helper (Tfh) cells that are required for the induction of germinal-center formation. Required to drive naive CD4(+) T cells to the Th17 lineage. Also required for proliferation of myeloma cells and the survival of plasmablast cells. Its function is as follows. Acts as an essential factor in bone homeostasis and on vessels directly or indirectly by induction of VEGF, resulting in increased angiogenesis activity and vascular permeability. Induces, through 'trans-signaling' and synergistically with IL1B and TNF, the production of VEGF. Involved in metabolic controls, is discharged into the bloodstream after muscle contraction increasing lipolysis and improving insulin resistance. 'Trans-signaling' in central nervous system also regulates energy and glucose homeostasis. Mediates, through GLP-1, crosstalk between insulin-sensitive tissues, intestinal L cells and pancreatic islets to adapt to changes in insulin demand. Also acts as a myokine. Plays a protective role during liver injury, being required for maintenance of tissue regeneration. Also has a pivotal role in iron metabolism by regulating HAMP/hepcidin expression upon inflammation or bacterial infection. Through activation of IL6ST-YAP-NOTCH pathway, induces inflammation-induced epithelial regeneration. This Camelus bactrianus (Bactrian camel) protein is Interleukin-6 (IL6).